The chain runs to 37 residues: Large ribosomal subunit protein bL36 (37 aa).

The protein belongs to the bacterial ribosomal protein bL36 family.

In Acetivibrio thermocellus (strain ATCC 27405 / DSM 1237 / JCM 9322 / NBRC 103400 / NCIMB 10682 / NRRL B-4536 / VPI 7372) (Clostridium thermocellum), this protein is Large ribosomal subunit protein bL36.